A 274-amino-acid polypeptide reads, in one-letter code: Dermonecrotic toxin SdSicTox-betaIIB1bvii (274 aa).

Residue His5 is part of the active site. 2 residues coordinate Mg(2+): Glu25 and Asp27. His41 functions as the Nucleophile in the catalytic mechanism. 2 disulfide bridges follow: Cys45/Cys51 and Cys47/Cys190. Asp85 contacts Mg(2+).

Belongs to the arthropod phospholipase D family. Class II subfamily. Mg(2+) serves as cofactor. Expressed by the venom gland.

It localises to the secreted. It catalyses the reaction an N-(acyl)-sphingosylphosphocholine = an N-(acyl)-sphingosyl-1,3-cyclic phosphate + choline. The enzyme catalyses an N-(acyl)-sphingosylphosphoethanolamine = an N-(acyl)-sphingosyl-1,3-cyclic phosphate + ethanolamine. The catalysed reaction is a 1-acyl-sn-glycero-3-phosphocholine = a 1-acyl-sn-glycero-2,3-cyclic phosphate + choline. It carries out the reaction a 1-acyl-sn-glycero-3-phosphoethanolamine = a 1-acyl-sn-glycero-2,3-cyclic phosphate + ethanolamine. Its function is as follows. Dermonecrotic toxins cleave the phosphodiester linkage between the phosphate and headgroup of certain phospholipids (sphingolipid and lysolipid substrates), forming an alcohol (often choline) and a cyclic phosphate. This toxin acts on sphingomyelin (SM). It may also act on ceramide phosphoethanolamine (CPE), lysophosphatidylcholine (LPC) and lysophosphatidylethanolamine (LPE), but not on lysophosphatidylserine (LPS), and lysophosphatidylglycerol (LPG). It acts by transphosphatidylation, releasing exclusively cyclic phosphate products as second products. Induces dermonecrosis, hemolysis, increased vascular permeability, edema, inflammatory response, and platelet aggregation. This is Dermonecrotic toxin SdSicTox-betaIIB1bvii from Sicarius cf. damarensis (strain GJB-2008) (Six-eyed sand spider).